Consider the following 348-residue polypeptide: NADH-ubiquinone oxidoreductase chain 2 (348 aa).

Transmembrane regions (helical) follow at residues 2–22 (SPYV…LTLF), 26–46 (WLMA…MMTY), 55–75 (AAIK…FAII), 96–116 (VLMT…FWVP), 149–169 (LNMK…GWGG), 178–198 (ILAY…MINP), 199–219 (SLAL…FLML), 242–262 (TAIL…GFMP), 276–296 (IIMA…YMRI), and 323–343 (INII…TPLL).

The protein belongs to the complex I subunit 2 family. As to quaternary structure, core subunit of respiratory chain NADH dehydrogenase (Complex I) which is composed of 45 different subunits. Interacts with TMEM242.

The protein resides in the mitochondrion inner membrane. The catalysed reaction is a ubiquinone + NADH + 5 H(+)(in) = a ubiquinol + NAD(+) + 4 H(+)(out). In terms of biological role, core subunit of the mitochondrial membrane respiratory chain NADH dehydrogenase (Complex I) that is believed to belong to the minimal assembly required for catalysis. Complex I functions in the transfer of electrons from NADH to the respiratory chain. The immediate electron acceptor for the enzyme is believed to be ubiquinone. The sequence is that of NADH-ubiquinone oxidoreductase chain 2 from Osphranter robustus (Wallaroo).